A 613-amino-acid chain; its full sequence is Sulfhydryl oxidase 1 (613 aa).

The signal sequence occupies residues 1–30 (MTGCGRRSGWLPPLRLLLLPLLLGGPGVGA). The 121-residue stretch at 37–157 (YSASDPLTLL…RERLIDALES (121 aa)) folds into the Thioredoxin domain. Catalysis depends on nucleophile residues Cys-71 and Cys-74. 2 cysteine pairs are disulfide-bonded: Cys-71–Cys-74 and Cys-102–Cys-111. N-linked (GlcNAc...) asparagine glycans are attached at residues Asn-131 and Asn-244. A disulfide bond links Cys-394 and Cys-406. An ERV/ALR sulfhydryl oxidase domain is found at 397-504 (SESHFRGFPC…EDPQFPKVQW (108 aa)). The FAD site is built by Arg-402, Trp-409, and His-413. Ser-427 carries the post-translational modification Phosphoserine. Cys-450 and Cys-453 form a disulfide bridge. FAD-binding positions include Asp-452, His-456, 479–486 (WTSHNRVN), Lys-501, and Trp-504. Cysteines 510 and 513 form a disulfide.

The protein belongs to the quiescin-sulfhydryl oxidase (QSOX) family. As to quaternary structure, monomer. Requires FAD as cofactor. In terms of processing, N-glycosylated. O-glycosylated on Thr and Ser residues. Detected in endometrium and in uterus glandular epithelial cells (at protein level). Expressed in testis, placenta, pancreas, lung, ovary, endometrium, but not in brain, liver and kidney tissues. Higher expression in epithelial cells.

The protein localises to the secreted. It catalyses the reaction 2 R'C(R)SH + O2 = R'C(R)S-S(R)CR' + H2O2. Catalyzes the oxidation of sulfhydryl groups in peptide and protein thiols to disulfides with the reduction of oxygen to hydrogen peroxide. Plays a role in disulfide bond formation in a variety of extracellular proteins. In fibroblasts, required for normal incorporation of laminin into the extracellular matrix, and thereby for normal cell-cell adhesion and cell migration. This is Sulfhydryl oxidase 1 (QSOX1) from Cavia porcellus (Guinea pig).